The following is a 300-amino-acid chain: Tumor necrosis factor receptor superfamily member 6B (300 aa).

A signal peptide spans 1–29; the sequence is MRALEGPGLSLLCLVLALPALLPVPAVRG. TNFR-Cys repeat units lie at residues 31–70, 72–113, 115–150, and 152–193; these read AETPTYPWRDAETGERLVCAQCPPGTFVQRPCRRDSPTTC, PCPP…NRAC, CRTGFFAHAGFCLEHASCPPGAGVIAPGTPSQNTQC, and PCPP…DTLC. 8 cysteine pairs are disulfide-bonded: cysteine 49–cysteine 62, cysteine 52–cysteine 70, cysteine 73–cysteine 88, cysteine 91–cysteine 105, cysteine 95–cysteine 113, cysteine 115–cysteine 126, cysteine 132–cysteine 150, and cysteine 153–cysteine 168. Asparagine 173 carries an N-linked (GlcNAc...) asparagine glycan. Cysteine 174 and cysteine 193 form a disulfide bridge.

As to expression, detected in fetal lung, brain and liver. Detected in adult stomach, spinal cord, lymph node, trachea, spleen, colon and lung. Highly expressed in several primary tumors from colon, stomach, rectum, esophagus and in SW480 colon carcinoma cells.

The protein resides in the secreted. Decoy receptor that can neutralize the cytotoxic ligands TNFS14/LIGHT, TNFSF15 and TNFSF6/FASL. Protects against apoptosis. The chain is Tumor necrosis factor receptor superfamily member 6B (TNFRSF6B) from Homo sapiens (Human).